The sequence spans 495 residues: Glutamyl-tRNA(Gln) amidotransferase subunit A (495 aa).

Residues Lys-75 and Ser-150 each act as charge relay system in the active site. The Acyl-ester intermediate role is filled by Ser-174.

It belongs to the amidase family. GatA subfamily. Heterotrimer of A, B and C subunits.

The catalysed reaction is L-glutamyl-tRNA(Gln) + L-glutamine + ATP + H2O = L-glutaminyl-tRNA(Gln) + L-glutamate + ADP + phosphate + H(+). Allows the formation of correctly charged Gln-tRNA(Gln) through the transamidation of misacylated Glu-tRNA(Gln) in organisms which lack glutaminyl-tRNA synthetase. The reaction takes place in the presence of glutamine and ATP through an activated gamma-phospho-Glu-tRNA(Gln). The sequence is that of Glutamyl-tRNA(Gln) amidotransferase subunit A from Paraburkholderia phytofirmans (strain DSM 17436 / LMG 22146 / PsJN) (Burkholderia phytofirmans).